A 497-amino-acid chain; its full sequence is Ethanolamine-phosphate phospho-lyase (497 aa).

An N6-(pyridoxal phosphate)lysine modification is found at lysine 278. A disordered region spans residues 440–497 (TGAETESGISKNTPCRTKMPKEAQSELLRDSSLESRENPSQKRNGLCTDSLLSKRLRT). Residues 458–479 (MPKEAQSELLRDSSLESRENPS) are compositionally biased toward basic and acidic residues.

Belongs to the class-III pyridoxal-phosphate-dependent aminotransferase family. As to quaternary structure, homotetramer. The cofactor is pyridoxal 5'-phosphate.

The protein localises to the mitochondrion. The catalysed reaction is phosphoethanolamine + H2O = acetaldehyde + NH4(+) + phosphate. Its function is as follows. Catalyzes the pyridoxal-phosphate-dependent breakdown of phosphoethanolamine, converting it to ammonia, inorganic phosphate and acetaldehyde. The protein is Ethanolamine-phosphate phospho-lyase (ETNPPL) of Bos taurus (Bovine).